The chain runs to 239 residues: Large ribosomal subunit protein uL1 (239 aa).

Belongs to the universal ribosomal protein uL1 family. In terms of assembly, part of the 50S ribosomal subunit.

In terms of biological role, binds directly to 23S rRNA. The L1 stalk is quite mobile in the ribosome, and is involved in E site tRNA release. Functionally, protein L1 is also a translational repressor protein, it controls the translation of the L11 operon by binding to its mRNA. This Rhodococcus erythropolis (strain PR4 / NBRC 100887) protein is Large ribosomal subunit protein uL1.